A 430-amino-acid polypeptide reads, in one-letter code: MKLLVIGSGGREHALVWKLAHSRRVSEIIVAPGNAGTATETKCRNAPVQVTDLDGLLALAQREAVNITVVGPEVPLVAGIVDCFRAAGMRIFGPTAAAAQLEGSKAYAKDFMARHGIPTARYAVHTNVDAAISDVRQQGAPIVIKADGLAAGKGVIVAMTVTEAEAAIRDMLSGNAFGHAGARVVIEEYLDGEEASFISMVDGTHALPMATSQDHKRVSDGDIGPNTGGMGAYSPAPIITDEIHARVMREIVNPTVAGMIADGTPFMGFLYAGLMIDVHGAPKVIEFNVRFGDPETQPVMMRLQSDLLDLIEAALNGDLDKVQAQWDPHPSLGVVMAARPYPEMPITGEVISGLDALPANVKVFHAGTALDVAGRVVTAGGRVLCVTALGSNVSEAQRHAYGGVASLHWANAFQRSDIGWRAIMREHTVR.

The ATP-grasp domain occupies Lys-109–Asn-316. Val-135 to Ser-196 is an ATP binding site. Mg(2+) is bound by residues Glu-286 and Asn-288.

The protein belongs to the GARS family. Mg(2+) is required as a cofactor. The cofactor is Mn(2+).

The catalysed reaction is 5-phospho-beta-D-ribosylamine + glycine + ATP = N(1)-(5-phospho-beta-D-ribosyl)glycinamide + ADP + phosphate + H(+). It participates in purine metabolism; IMP biosynthesis via de novo pathway; N(1)-(5-phospho-D-ribosyl)glycinamide from 5-phospho-alpha-D-ribose 1-diphosphate: step 2/2. This Xylella fastidiosa (strain Temecula1 / ATCC 700964) protein is Phosphoribosylamine--glycine ligase.